Here is a 76-residue protein sequence, read N- to C-terminus: Conotoxin VnMEKL-0111 (76 aa).

The N-terminal stretch at 1 to 18 (MKLTILFLVAAVLMSTQA) is a signal peptide. Residues 19 to 45 (LIQHDGEKSQKAKMKFLTARTLSAKTR) constitute a propeptide that is removed on maturation. 3 disulfides stabilise this stretch: C49–C65, C56–C70, and C64–C74.

Belongs to the conotoxin O2 superfamily. In terms of tissue distribution, expressed by the venom duct.

It is found in the secreted. This is Conotoxin VnMEKL-0111 from Conus ventricosus (Mediterranean cone).